The sequence spans 302 residues: tRNA pseudouridine synthase B (302 aa).

Aspartate 45 serves as the catalytic Nucleophile.

Belongs to the pseudouridine synthase TruB family. Type 1 subfamily.

It catalyses the reaction uridine(55) in tRNA = pseudouridine(55) in tRNA. Functionally, responsible for synthesis of pseudouridine from uracil-55 in the psi GC loop of transfer RNAs. The sequence is that of tRNA pseudouridine synthase B from Francisella tularensis subsp. tularensis (strain WY96-3418).